The primary structure comprises 381 residues: Spindlin interactor and repressor of chromatin-binding protein (381 aa).

K49 is covalently cross-linked (Glycyl lysine isopeptide (Lys-Gly) (interchain with G-Cter in SUMO2)). A phosphoserine mark is found at S122 and S149. The segment covering 148–158 has biased composition (polar residues); that stretch reads PSLPSLESGQD. The segment at 148–170 is disordered; it reads PSLPSLESGQDGQPDPISNPDPV. Glycyl lysine isopeptide (Lys-Gly) (interchain with G-Cter in SUMO2) cross-links involve residues K190 and K221. Disordered stretches follow at residues 203–270, 285–320, and 335–381; these read PVTP…TDGS, LRTT…LRGT, and AVSL…GSGV. Basic and acidic residues predominate over residues 219–229; the sequence is RWKESPENEPA. Residues S249 and S252 each carry the phosphoserine modification. Basic and acidic residues predominate over residues 288 to 299; the sequence is TDCKDSSKDSRA. Residues K291 and K295 each participate in a glycyl lysine isopeptide (Lys-Gly) (interchain with G-Cter in SUMO2) cross-link. The span at 304-315 shows a compositional bias: low complexity; the sequence is PQPQNPSSASPP. S310 and S313 each carry phosphoserine.

In terms of assembly, interacts with SPIN1, SPIN2A, SPIN2B, SPIN3 and SPIN4. Interacts with TCF7L2 in a SPIN1-dependent manner. Interacts with PARP1; promoting PARP1 ADP-ribosyltransferase activity.

Its subcellular location is the nucleus. The protein resides in the chromosome. Functionally, chromatin protein that stabilizes SPIN1 and enhances its association with histone H3 trimethylated at both 'Lys-4' and 'Lys-9' (H3K4me3K9me3). Positively regulates poly-ADP-ribosylation in response to DNA damage; acts by facilitating PARP1 ADP-ribosyltransferase activity. This is Spindlin interactor and repressor of chromatin-binding protein from Mus musculus (Mouse).